The following is a 1295-amino-acid chain: Unconventional myosin-VI (1295 aa).

A Myosin N-terminal SH3-like domain is found at Glu2–Glu53. Residues Lys57–Lys771 enclose the Myosin motor domain. Gly151–Thr158 serves as a coordination point for ATP. At Ser267 the chain carries Phosphoserine. The segment at Tyr273–Phe317 is responsible for slow ATPase activity. Thr405 is subject to Phosphothreonine. Position 604 is a phosphoserine (Ser604). An actin-binding region spans residues Leu651–Leu673. The tract at residues Lys782 to Ile810 is required for binding calmodulin. Positions Arg813–Lys842 constitute an IQ domain. The three-helix bundle stretch occupies residues Pro835 to Lys916. The SAH stretch occupies residues Lys917–Glu984. Positions Glu934–Arg955 are disordered. The interval Lys1061–Ala1286 is interaction with TAX1BP1 and CALCOCO2/NDP52. Residues Arg1117–Leu1119 form an interaction with OPTN region. Ser1156 carries the post-translational modification Phosphoserine. The interval Gln1158–Ala1286 is interaction with TOM1.

Belongs to the TRAFAC class myosin-kinesin ATPase superfamily. Myosin family. Homodimer; dimerization seems to implicate the unfolding of the three-helix bundle region creating an additional calmodulin binding site, and cargo binding. Able to function as a monomer under specific conditions in vitro. Forms a complex with CFTR and DAB2 in the apical membrane of epithelial cells. Component of the DISP/DOCK7-induced septin displacement complex, at least composed of DOCK7, LRCH3 and MYO6. Binding to calmodulin through a unique insert, not found in other myosins, located in the neck region between the motor domain and the IQ domain appears to contribute to the directionality reversal. This interaction occurs only if the C-terminal lobe of calmodulin is occupied by calcium. Interaction with F-actin/ACTN1 occurs only at the apical brush border domain of the proximal tubule cells. Interacts with DAB2. In vitro, the C-terminal globular tail binds a C-terminal region of DAB2. Interacts with CFTR. Interacts with CABP5. Interacts (via residues 1158-1286) with TOM1 (via residues 392-463). Interacts (via residues 1060-1285) with OPTN. Interacts (via residues 1060-1285) with TAX1BP1 and CALCOCO2/NDP52. Interacts with TOM1L2. Interacts with CLIC5; may work together in a complex which also includes RDX and MYO6 to stabilize linkages between the plasma membrane and subjacent actin cytoskeleton at the base of stereocilia. Post-translationally, phosphorylation in the motor domain, induced by EGF, results in translocation of MYO6 from the cell surface to membrane ruffles and affects F-actin dynamics. Phosphorylated in vitro by p21-activated kinase (PAK). Expressed in the retina (at protein level).

The protein localises to the golgi apparatus. Its subcellular location is the trans-Golgi network membrane. It is found in the nucleus. The protein resides in the cytoplasm. It localises to the perinuclear region. The protein localises to the membrane. Its subcellular location is the clathrin-coated pit. It is found in the cytoplasmic vesicle. The protein resides in the clathrin-coated vesicle. It localises to the cell projection. The protein localises to the filopodium. Its subcellular location is the ruffle membrane. It is found in the microvillus. The protein resides in the cytosol. In terms of biological role, myosins are actin-based motor molecules with ATPase activity. Unconventional myosins serve in intracellular movements. Myosin 6 is a reverse-direction motor protein that moves towards the minus-end of actin filaments. Has slow rate of actin-activated ADP release due to weak ATP binding. Functions in a variety of intracellular processes such as vesicular membrane trafficking and cell migration. Required for the structural integrity of the Golgi apparatus via the p53-dependent pro-survival pathway. Appears to be involved in a very early step of clathrin-mediated endocytosis in polarized epithelial cells. Together with TOM1, mediates delivery of endocytic cargo to autophagosomes thereby promoting autophagosome maturation and driving fusion with lysosomes. Links TOM1 with autophagy receptors, such as TAX1BP1; CALCOCO2/NDP52 and OPTN. May act as a regulator of F-actin dynamics. As part of the DISP complex, may regulate the association of septins with actin and thereby regulate the actin cytoskeleton. May play a role in transporting DAB2 from the plasma membrane to specific cellular targets. May play a role in the extension and network organization of neurites. Required for structural integrity of inner ear hair cells. Required for the correct localization of CLIC5 and RDX at the stereocilium base. Modulates RNA polymerase II-dependent transcription. The sequence is that of Unconventional myosin-VI from Bos taurus (Bovine).